The chain runs to 366 residues: GTP cyclohydrolase 1 type 2 homolog (366 aa).

Zn(2+) contacts are provided by His64, His65, Asp102, His326, and Glu329.

It belongs to the GTP cyclohydrolase I type 2/NIF3 family. As to quaternary structure, toroid-shaped homohexamer that has a central cavity of about 38 Angstroms diameter.

This is GTP cyclohydrolase 1 type 2 homolog from Staphylococcus aureus (strain Mu50 / ATCC 700699).